Reading from the N-terminus, the 156-residue chain is Deoxyuridine 5'-triphosphate nucleotidohydrolase (156 aa).

Residues 76–78, asparagine 89, 93–95, and lysine 103 each bind substrate; these read RSG and TVD.

Belongs to the dUTPase family. Mg(2+) serves as cofactor.

The catalysed reaction is dUTP + H2O = dUMP + diphosphate + H(+). It functions in the pathway pyrimidine metabolism; dUMP biosynthesis; dUMP from dCTP (dUTP route): step 2/2. Its function is as follows. This enzyme is involved in nucleotide metabolism: it produces dUMP, the immediate precursor of thymidine nucleotides and it decreases the intracellular concentration of dUTP so that uracil cannot be incorporated into DNA. The sequence is that of Deoxyuridine 5'-triphosphate nucleotidohydrolase from Rhizobium etli (strain CIAT 652).